A 476-amino-acid chain; its full sequence is Cysteine--tRNA ligase (476 aa).

Cys-28 is a binding site for Zn(2+). Residues 30–40 carry the 'HIGH' region motif; it reads PTVYDNTHLGH. Zn(2+)-binding residues include Cys-208, His-233, and Glu-237. Residues 265–269 carry the 'KMSKS' region motif; sequence KMSKS. Lys-268 contacts ATP.

The protein belongs to the class-I aminoacyl-tRNA synthetase family. Requires Zn(2+) as cofactor.

It localises to the cytoplasm. It carries out the reaction tRNA(Cys) + L-cysteine + ATP = L-cysteinyl-tRNA(Cys) + AMP + diphosphate. The sequence is that of Cysteine--tRNA ligase from Methanococcus maripaludis (strain DSM 14266 / JCM 13030 / NBRC 101832 / S2 / LL).